The primary structure comprises 455 residues: UDP-N-acetylmuramoyl-tripeptide--D-alanyl-D-alanine ligase (455 aa).

ATP is bound at residue 107-113 (GSCGKTS).

It belongs to the MurCDEF family. MurF subfamily.

It localises to the cytoplasm. It catalyses the reaction D-alanyl-D-alanine + UDP-N-acetyl-alpha-D-muramoyl-L-alanyl-gamma-D-glutamyl-meso-2,6-diaminopimelate + ATP = UDP-N-acetyl-alpha-D-muramoyl-L-alanyl-gamma-D-glutamyl-meso-2,6-diaminopimeloyl-D-alanyl-D-alanine + ADP + phosphate + H(+). Its pathway is cell wall biogenesis; peptidoglycan biosynthesis. Involved in cell wall formation. Catalyzes the final step in the synthesis of UDP-N-acetylmuramoyl-pentapeptide, the precursor of murein. The chain is UDP-N-acetylmuramoyl-tripeptide--D-alanyl-D-alanine ligase from Buchnera aphidicola subsp. Acyrthosiphon pisum (strain APS) (Acyrthosiphon pisum symbiotic bacterium).